The following is a 468-amino-acid chain: 6-phospho-beta-galactosidase (468 aa).

5 residues coordinate D-galactose 6-phosphate: Gln-19, His-116, Asn-159, Glu-160, and Asn-297. Glu-160 serves as the catalytic Proton donor. Catalysis depends on Glu-375, which acts as the Nucleophile. The D-galactose 6-phosphate site is built by Ser-428, Trp-429, Lys-435, and Tyr-437.

Belongs to the glycosyl hydrolase 1 family.

It carries out the reaction a 6-phospho-beta-D-galactoside + H2O = D-galactose 6-phosphate + an alcohol. It functions in the pathway carbohydrate metabolism; lactose degradation; D-galactose 6-phosphate and beta-D-glucose from lactose 6-phosphate: step 1/1. The polypeptide is 6-phospho-beta-galactosidase (Streptococcus sanguinis (strain SK36)).